We begin with the raw amino-acid sequence, 1464 residues long: DNA-directed RNA polymerase subunit beta' (1464 aa).

Residues C66, C68, C96, and C99 each coordinate Zn(2+). D491, D493, and D495 together coordinate Mg(2+). Positions 838, 912, 919, and 922 each coordinate Zn(2+). Residues 1143–1200 (NDDDDDDYYDSDYYDYYDYSDDDDDYDDYDDYYYNYDDDENDNDNDYDYDYDYDYDYD) show a composition bias toward acidic residues. The tract at residues 1143 to 1229 (NDDDDDDYYD…YDYDYDSDSD (87 aa)) is disordered. Residues 1204 to 1219 (HNSYSHNSYSPSSNDN) are compositionally biased toward low complexity. Acidic residues predominate over residues 1220–1229 (YDYDYDSDSD).

It belongs to the RNA polymerase beta' chain family. The RNAP catalytic core consists of 2 alpha, 1 beta, 1 beta' and 1 omega subunit. When a sigma factor is associated with the core the holoenzyme is formed, which can initiate transcription. Mg(2+) serves as cofactor. It depends on Zn(2+) as a cofactor.

It catalyses the reaction RNA(n) + a ribonucleoside 5'-triphosphate = RNA(n+1) + diphosphate. DNA-dependent RNA polymerase catalyzes the transcription of DNA into RNA using the four ribonucleoside triphosphates as substrates. This is DNA-directed RNA polymerase subunit beta' from Karelsulcia muelleri (strain GWSS) (Sulcia muelleri).